The primary structure comprises 316 residues: HPr kinase/phosphorylase (316 aa).

Catalysis depends on residues H143 and K164. ATP is bound at residue 158 to 165 (GEAGSGKS). S165 provides a ligand contact to Mg(2+). Catalysis depends on D182, which acts as the Proton acceptor; for phosphorylation activity. Proton donor; for dephosphorylation activity. Residues 206–215 (LEVRGLGVLN) form an important for the catalytic mechanism of both phosphorylation and dephosphorylation region. Position 207 (E207) interacts with Mg(2+). The active site involves R251. An important for the catalytic mechanism of dephosphorylation region spans residues 272–277 (PVMPGR).

Belongs to the HPrK/P family. Homohexamer. The cofactor is Mg(2+).

It carries out the reaction [HPr protein]-L-serine + ATP = [HPr protein]-O-phospho-L-serine + ADP + H(+). It catalyses the reaction [HPr protein]-O-phospho-L-serine + phosphate + H(+) = [HPr protein]-L-serine + diphosphate. Functionally, catalyzes the ATP- as well as the pyrophosphate-dependent phosphorylation of a specific serine residue in HPr, a phosphocarrier protein of the phosphoenolpyruvate-dependent sugar phosphotransferase system (PTS). HprK/P also catalyzes the pyrophosphate-producing, inorganic phosphate-dependent dephosphorylation (phosphorolysis) of seryl-phosphorylated HPr (P-Ser-HPr). The protein is HPr kinase/phosphorylase of Xanthomonas euvesicatoria pv. vesicatoria (strain 85-10) (Xanthomonas campestris pv. vesicatoria).